Here is a 145-residue protein sequence, read N- to C-terminus: Class I hydrophobin 1 (145 aa).

The first 18 residues, 1–18 (MYASVIIYTLVALCGVMS), serve as a signal peptide directing secretion. Intrachain disulfides connect cysteine 88/cysteine 118, cysteine 95/cysteine 112, cysteine 96/cysteine 106, and cysteine 119/cysteine 128. An N-linked (GlcNAc...) asparagine glycan is attached at asparagine 108.

This sequence belongs to the fungal hydrophobin family. In terms of assembly, self-assembles to form functional amyloid fibrils called rodlets. Self-assembly into fibrillar rodlets occurs spontaneously at hydrophobic:hydrophilic interfaces and the rodlets further associate laterally to form amphipathic monolayers.

The protein localises to the secreted. It is found in the cell wall. Functionally, aerial growth, conidiation, and dispersal of filamentous fungi in the environment rely upon a capability of their secreting small amphipathic proteins called hydrophobins (HPBs) with low sequence identity. Class I can self-assemble into an outermost layer of rodlet bundles on aerial cell surfaces, conferring cellular hydrophobicity that supports fungal growth, development and dispersal; whereas Class II form highly ordered films at water-air interfaces through intermolecular interactions but contribute nothing to the rodlet structure. Hyd1 is a class I hydrophobin that is involved in plant root attachment and colonization, and that might also protect the growing hyphae from locally synthesized plant defense compounds during the first stages of cucumber interaction, allowing this opportunistic, non-pathogenic fungus to colonize the intercellular spaces of the plant root. This chain is Class I hydrophobin 1, found in Trichoderma asperellum (Filamentous fungus).